The sequence spans 194 residues: Fe/S biogenesis protein NfuA (194 aa).

[4Fe-4S] cluster contacts are provided by C152 and C155.

The protein belongs to the NfuA family. Homodimer. It depends on [4Fe-4S] cluster as a cofactor.

In terms of biological role, involved in iron-sulfur cluster biogenesis. Binds a 4Fe-4S cluster, can transfer this cluster to apoproteins, and thereby intervenes in the maturation of Fe/S proteins. Could also act as a scaffold/chaperone for damaged Fe/S proteins. This chain is Fe/S biogenesis protein NfuA, found in Ectopseudomonas mendocina (strain ymp) (Pseudomonas mendocina).